Here is a 148-residue protein sequence, read N- to C-terminus: Probable calcium-binding protein CML14 (148 aa).

3 EF-hand domains span residues 9 to 44 (DQVS…LGGN), 80 to 115 (PFDR…IGEK), and 116 to 148 (LQPS…MVAK). Residues Asp-22, Asp-24, Asp-26, Lys-28, and Glu-33 each contribute to the Ca(2+) site.

In terms of biological role, potential calcium sensor. In Arabidopsis thaliana (Mouse-ear cress), this protein is Probable calcium-binding protein CML14 (CML14).